The chain runs to 304 residues: Acetyl-coenzyme A carboxylase carboxyl transferase subunit beta (304 aa).

In terms of domain architecture, CoA carboxyltransferase N-terminal spans 25–294; that stretch reads LWIKCPETGE…KAVKRDTATE (270 aa).

It belongs to the AccD/PCCB family. As to quaternary structure, acetyl-CoA carboxylase is a heterohexamer composed of biotin carboxyl carrier protein (AccB), biotin carboxylase (AccC) and two subunits each of ACCase subunit alpha (AccA) and ACCase subunit beta (AccD).

The protein resides in the cytoplasm. It catalyses the reaction N(6)-carboxybiotinyl-L-lysyl-[protein] + acetyl-CoA = N(6)-biotinyl-L-lysyl-[protein] + malonyl-CoA. Its pathway is lipid metabolism; malonyl-CoA biosynthesis; malonyl-CoA from acetyl-CoA: step 1/1. Its function is as follows. Component of the acetyl coenzyme A carboxylase (ACC) complex. Biotin carboxylase (BC) catalyzes the carboxylation of biotin on its carrier protein (BCCP) and then the CO(2) group is transferred by the transcarboxylase to acetyl-CoA to form malonyl-CoA. This is Acetyl-coenzyme A carboxylase carboxyl transferase subunit beta from Rhizobium meliloti (strain 1021) (Ensifer meliloti).